The following is a 903-amino-acid chain: Disintegrin and metalloproteinase domain-containing protein 12 (903 aa).

The N-terminal stretch at 1–31 (MAERPARRAPPARALLLALAGALLAPRAARG) is a signal peptide. Positions 32 to 205 (MSLWDQRGTY…SQMRARRHKR (174 aa)) are excised as a propeptide. N-linked (GlcNAc...) asparagine glycosylation is found at asparagine 112, asparagine 147, and asparagine 157. Positions 175 to 182 (GLCGSQHN) match the Cysteine switch motif. Cysteine 177 contributes to the Zn(2+) binding site. N-linked (GlcNAc...) asparagine glycosylation is found at asparagine 182 and asparagine 185. The Extracellular segment spans residues 206 to 706 (ETLKMTKYVE…GPIRQADNQG (501 aa)). The Peptidase M12B domain occupies 212–414 (KYVELVIVAD…GMGMCLFNLP (203 aa)). 3 disulfide bridges follow: cysteine 323-cysteine 409, cysteine 365-cysteine 393, and cysteine 367-cysteine 376. Histidine 348 contacts Zn(2+). The active site involves glutamate 349. Zn(2+) contacts are provided by histidine 352 and histidine 358. A Disintegrin domain is found at 422–508 (GRKCGNGYVE…HCPANVYLHD (87 aa)). The N-linked (GlcNAc...) asparagine glycan is linked to asparagine 450. Cysteine 480 and cysteine 500 form a disulfide bridge. Residue asparagine 649 is glycosylated (N-linked (GlcNAc...) asparagine). The EGF-like domain occupies 654-686 (GVHKCAMQCHGRGVCNNRKNCHCEAHWAPPFCD). Disulfide bonds link cysteine 658–cysteine 668, cysteine 662–cysteine 674, and cysteine 676–cysteine 685. Residues 707–727 (LTVGILVSILCLLAAGFVVYL) traverse the membrane as a helical segment. The Cytoplasmic portion of the chain corresponds to 728–903 (KRKTLMRLLF…PRPSHNAYIK (176 aa)). Disordered regions lie at residues 753-790 (SRTP…HSLK) and 819-903 (HQTP…AYIK). 2 short sequence motifs (SH3-binding; class II) span residues 824-830 (APSGPAR) and 846-852 (KPSPPQK). Short sequence motifs (SH3-binding; class I) lie at residues 830 to 837 (RPLPASPA), 852 to 858 (KPLPADP), and 881 to 887 (RPAPIRP). The segment covering 847-856 (PSPPQKPLPA) has biased composition (pro residues). A Phosphotyrosine; by SRC modification is found at tyrosine 901.

As to quaternary structure, interacts with alpha-actinin-2 and with syndecans. Interacts with SH3PXD2A. Interacts with FST3. Interacts with RACK1; the interaction is required for PKC-dependent translocation of ADAM12 to the cell membrane. Zn(2+) serves as cofactor. In terms of processing, the precursor is cleaved by a furin endopeptidase. In terms of tissue distribution, expressed during early developing mesenchymal cells that give rise to skeletal muscle, bones and visceral organs. Not expressed in adult normal muscle but expressed in regenerating muscle.

It is found in the membrane. Its function is as follows. Involved in skeletal muscle regeneration, specifically at the onset of cell fusion. Also involved in macrophage-derived giant cells (MGC) and osteoclast formation from mononuclear precursors. The chain is Disintegrin and metalloproteinase domain-containing protein 12 (Adam12) from Mus musculus (Mouse).